The primary structure comprises 231 residues: 2-C-methyl-D-erythritol 2,4-cyclodiphosphate synthase, chloroplastic (231 aa).

The transit peptide at 1–52 directs the protein to the chloroplast; that stretch reads MATSSTQLLLSSSSLFHSQITKKPFLLPATKIGVWRPKKSLSLSCRPSASVS. A divalent metal cation-binding residues include Asp-82 and His-84. Substrate contacts are provided by residues 82 to 84, 108 to 109, 112 to 120, 130 to 132, 135 to 139, Asp-139, 174 to 180, and 205 to 209; these read DLH, HS, DVLLHCVVD, DIG, FPDSD, LQRPKIS, and AKTHE. Residue His-116 participates in a divalent metal cation binding.

Belongs to the IspF family. Homotrimer. It depends on a divalent metal cation as a cofactor.

The protein localises to the plastid. The protein resides in the chloroplast stroma. It carries out the reaction 4-CDP-2-C-methyl-D-erythritol 2-phosphate = 2-C-methyl-D-erythritol 2,4-cyclic diphosphate + CMP. It functions in the pathway isoprenoid biosynthesis; isopentenyl diphosphate biosynthesis via DXP pathway; isopentenyl diphosphate from 1-deoxy-D-xylulose 5-phosphate: step 4/6. Functionally, enzyme of the plastid non-mevalonate pathway for isoprenoid biosynthesis that converts 4-diphosphocytidyl-2C-methyl-D-erythritol 2-phosphate into 2C-methyl-D-erythritol 2,4-cyclodiphosphate and CMP. Is essential for chloroplast development. This Arabidopsis thaliana (Mouse-ear cress) protein is 2-C-methyl-D-erythritol 2,4-cyclodiphosphate synthase, chloroplastic.